Consider the following 146-residue polypeptide: UPF0260 protein Ssed_2516 (146 aa).

This sequence belongs to the UPF0260 family.

This Shewanella sediminis (strain HAW-EB3) protein is UPF0260 protein Ssed_2516.